We begin with the raw amino-acid sequence, 608 residues long: Kelch-like protein 10 (608 aa).

A BTB domain is found at 39–106 (CDVVIKVNGF…AYTRTVPITP (68 aa)). Kelch repeat units lie at residues 292–339 (ILFA…YLKG), 340–386 (YVYI…VLGN), 388–433 (IYAM…TLYG), 434–480 (KVYI…AYGE), 481–527 (HVYA…VVDD), and 529–574 (LFVV…VVPG). A Phosphoserine modification is found at S501.

In terms of assembly, self-associates. Interacts with CUL3; indicative for the participation in an E3 ubiquitin ligase complex.

It is found in the cytoplasm. It participates in protein modification; protein ubiquitination. May be a substrate-specific adapter of a CUL3-based E3 ubiquitin-protein ligase complex which mediates the ubiquitination and subsequent proteasomal degradation of target proteins during spermatogenesis. This is Kelch-like protein 10 (KLHL10) from Homo sapiens (Human).